Here is a 316-residue protein sequence, read N- to C-terminus: Putative ubiquitin-conjugating enzyme E2 39 (316 aa).

The UBC core domain occupies 57–217 (NWVKDIQKEW…VFVFSLKTMH (161 aa)). The Glycyl thioester intermediate role is filled by C143.

The protein belongs to the ubiquitin-conjugating enzyme family.

It catalyses the reaction S-ubiquitinyl-[E1 ubiquitin-activating enzyme]-L-cysteine + [E2 ubiquitin-conjugating enzyme]-L-cysteine = [E1 ubiquitin-activating enzyme]-L-cysteine + S-ubiquitinyl-[E2 ubiquitin-conjugating enzyme]-L-cysteine.. Its pathway is protein modification; protein ubiquitination. Accepts the ubiquitin from the E1 complex and catalyzes its covalent attachment to other proteins. This Arabidopsis thaliana (Mouse-ear cress) protein is Putative ubiquitin-conjugating enzyme E2 39 (UBC39).